A 76-amino-acid chain; its full sequence is UPF0291 protein MW2494 (76 aa).

The protein belongs to the UPF0291 family.

Its subcellular location is the cytoplasm. The chain is UPF0291 protein MW2494 from Staphylococcus aureus (strain MW2).